The primary structure comprises 54 residues: Sperm protamine P3 (54 aa).

The interval 1 to 54 (RRRRRRGKGKGGKKKKGKKRRRRGRKGKGKGKKKGKRKGKRGGKRRRRRRKGKK) is disordered.

In terms of tissue distribution, gonads.

The protein resides in the nucleus. The protein localises to the chromosome. Protamines substitute for histones in the chromatin of sperm during the haploid phase of spermatogenesis. They compact sperm DNA into a highly condensed, stable and inactive complex. The chain is Sperm protamine P3 from Bolinus brandaris (Purple dye murex).